A 238-amino-acid chain; its full sequence is tRNA (guanine-N(7)-)-methyltransferase (238 aa).

Positions 68, 93, 120, and 143 each coordinate S-adenosyl-L-methionine. Asp143 is a catalytic residue. Substrate-binding positions include Lys147, Asp179, and 216–219 (TKFE).

It belongs to the class I-like SAM-binding methyltransferase superfamily. TrmB family.

It carries out the reaction guanosine(46) in tRNA + S-adenosyl-L-methionine = N(7)-methylguanosine(46) in tRNA + S-adenosyl-L-homocysteine. Its pathway is tRNA modification; N(7)-methylguanine-tRNA biosynthesis. Its function is as follows. Catalyzes the formation of N(7)-methylguanine at position 46 (m7G46) in tRNA. The polypeptide is tRNA (guanine-N(7)-)-methyltransferase (Ectopseudomonas mendocina (strain ymp) (Pseudomonas mendocina)).